Reading from the N-terminus, the 476-residue chain is Eukaryotic translation initiation factor 3 subunit L (476 aa).

The PCI domain maps to 257–452 (DAIRMFSHIL…DLDYALENDL (196 aa)).

The protein belongs to the eIF-3 subunit L family. Component of the eukaryotic translation initiation factor 3 (eIF-3) complex.

The protein resides in the cytoplasm. Its function is as follows. Component of the eukaryotic translation initiation factor 3 (eIF-3) complex, which is involved in protein synthesis of a specialized repertoire of mRNAs and, together with other initiation factors, stimulates binding of mRNA and methionyl-tRNAi to the 40S ribosome. The eIF-3 complex specifically targets and initiates translation of a subset of mRNAs involved in cell proliferation. The polypeptide is Eukaryotic translation initiation factor 3 subunit L (Aspergillus niger (strain ATCC MYA-4892 / CBS 513.88 / FGSC A1513)).